A 530-amino-acid polypeptide reads, in one-letter code: MRRDSDMASHIQQPGGHGNPGPAPSPSPGPGPGPGASERVALKKEIGLVSACTIIIGNIIGSGIFISPKGVLEHSGSVGLALFVWVLGGGVTALGSLCYAELGVAIPKSGGDYAYVTEIFGGLAGFLLLWSAVLIMYPTSLAVISMTFSNYVLQPVFPNCIPPATASRVLSMACLMLLTWVNSSSVRWATRIQVIFTGGKLLALSLIITVGFVQIFQGHFEELRPTNAFAFWMTPSVGHLALAFLQGSFAFSGWNFLNYVTEELVDPRKNLPRAIFISIPLVTFVYTFTNVAYFTAMSPQELLSSNAVAVTFGEKLLGYFSWVMPVSVALSTFGGINGYLFTSSRLCFSGAREGHLPSFLAMIHVRRCTPIPALLVCCGATAVIMLVGDTYTLINYVSFINYLCYGVTILGLLVLRWRRPALHRPIKVNLLVPVVYLVFWAFLLVFSFISEPMVCGVGIIIILTGVPIFFLGVFWRSKPKCVHRFTESMTRWGQELCFVVYPQGSLEEEENGPMGQPSPLPITDKPLKTQ.

The tract at residues 1 to 36 (MRRDSDMASHIQQPGGHGNPGPAPSPSPGPGPGPGA) is disordered. Over residues 21 to 33 (GPAPSPSPGPGPG) the composition is skewed to pro residues. 10 helical membrane passes run 46 to 66 (IGLV…GIFI), 78 to 98 (VGLA…GSLC), 119 to 139 (IFGG…MYPT), 192 to 212 (IQVI…TVGF), 274 to 294 (AIFI…VAYF), 316 to 336 (LLGY…FGGI), 368 to 388 (CTPI…MLVG), 394 to 414 (INYV…GLLV), 430 to 450 (LLVP…SFIS), and 454 to 474 (VCGV…LGVF). Positions 508 to 530 (EEENGPMGQPSPLPITDKPLKTQ) are disordered.

This sequence belongs to the amino acid-polyamine-organocation (APC) superfamily. In terms of assembly, disulfide-linked heterodimer with the amino acid transport protein SLC3A2/4F2hc.

Its subcellular location is the cell membrane. It carries out the reaction L-alanine(in) + glycine(out) = L-alanine(out) + glycine(in). It catalyses the reaction L-serine(out) + L-alanine(in) = L-serine(in) + L-alanine(out). The catalysed reaction is L-threonine(out) + L-alanine(in) = L-threonine(in) + L-alanine(out). The enzyme catalyses L-cysteine(out) + L-alanine(in) = L-cysteine(in) + L-alanine(out). It carries out the reaction 2-aminoisobutanoate(out) + L-alanine(in) = 2-aminoisobutanoate(in) + L-alanine(out). It catalyses the reaction D-serine(out) + L-alanine(in) = D-serine(in) + L-alanine(out). The catalysed reaction is D-alanine(out) + L-alanine(in) = D-alanine(in) + L-alanine(out). The enzyme catalyses L-valine(out) + L-alanine(in) = L-valine(in) + L-alanine(out). It carries out the reaction L-methionine(out) + L-alanine(in) = L-methionine(in) + L-alanine(out). It catalyses the reaction beta-alanine(out) + L-alanine(in) = beta-alanine(in) + L-alanine(out). The catalysed reaction is D-cysteine(out) + L-alanine(in) = D-cysteine(in) + L-alanine(out). The enzyme catalyses D-threonine(out) + L-alanine(in) = D-threonine(in) + L-alanine(out). It carries out the reaction D-isoleucine(out) + D-serine(in) = D-isoleucine(in) + D-serine(out). It catalyses the reaction D-serine(in) = D-serine(out). Its function is as follows. Associates with SLC3A2/4F2hc to form a functional heterodimeric complex that translocates small neutral L- and D-amino acids across the plasma membrane. Preferentially mediates exchange transport, but can also operate via facilitated diffusion. Acts as a major transporter for glycine, L- and D-serine in the central nervous system. At the spinal cord and brainstem regulates glycine metabolism and glycinergic inhibitory neurotransmission by providing for glycine de novo synthesis from L-serine and glycine recycling from astrocytes to glycinergic motor neurons. At Schaffer collateral-CA1 synapses mediates D-serine and glycine release that modulates post-synaptic activation of NMDA receptors and excitatory glutamatergic transmission. May regulate D-serine release from mesenchymal progenitors located in developing subcutaneous adipose tissue, favoring white adipocyte over thermogenic beige adipocyte lineage commitment. The protein is Asc-type amino acid transporter 1 (Slc7a10) of Rattus norvegicus (Rat).